The sequence spans 328 residues: E3 ubiquitin-protein ligase SINA-like 5 (328 aa).

Residues Met-1–Lys-77 form a disordered region. 2 stretches are compositionally biased toward acidic residues: residues His-10–Glu-20 and Gly-27–Thr-62. Polar residues predominate over residues Thr-63–Lys-77. Residues Cys-86–Arg-122 form an RING-type; degenerate zinc finger. The SBD stretch occupies residues Val-136–Lys-324. The SIAH-type; degenerate zinc finger occupies Ala-139–His-197. Zn(2+) is bound by residues Cys-144, Cys-151, His-163, Cys-167, Cys-174, Cys-179, His-191, and His-197.

It belongs to the SINA (Seven in absentia) family.

It catalyses the reaction S-ubiquitinyl-[E2 ubiquitin-conjugating enzyme]-L-cysteine + [acceptor protein]-L-lysine = [E2 ubiquitin-conjugating enzyme]-L-cysteine + N(6)-ubiquitinyl-[acceptor protein]-L-lysine.. The protein operates within protein modification; protein ubiquitination. Functionally, E3 ubiquitin-protein ligase that mediates ubiquitination and subsequent proteasomal degradation of target proteins. E3 ubiquitin ligases accept ubiquitin from an E2 ubiquitin-conjugating enzyme in the form of a thioester and then directly transfers the ubiquitin to targeted substrates. It probably triggers the ubiquitin-mediated degradation of different substrates. The chain is E3 ubiquitin-protein ligase SINA-like 5 from Arabidopsis thaliana (Mouse-ear cress).